The primary structure comprises 284 residues: tRNA-cytidine(32) 2-sulfurtransferase (284 aa).

The PP-loop motif signature appears at 45–50 (SGGKDS). [4Fe-4S] cluster is bound by residues cysteine 120, cysteine 123, and cysteine 211.

Belongs to the TtcA family. In terms of assembly, homodimer. It depends on Mg(2+) as a cofactor. Requires [4Fe-4S] cluster as cofactor.

The protein resides in the cytoplasm. The enzyme catalyses cytidine(32) in tRNA + S-sulfanyl-L-cysteinyl-[cysteine desulfurase] + AH2 + ATP = 2-thiocytidine(32) in tRNA + L-cysteinyl-[cysteine desulfurase] + A + AMP + diphosphate + H(+). The protein operates within tRNA modification. Its function is as follows. Catalyzes the ATP-dependent 2-thiolation of cytidine in position 32 of tRNA, to form 2-thiocytidine (s(2)C32). The sulfur atoms are provided by the cysteine/cysteine desulfurase (IscS) system. The polypeptide is tRNA-cytidine(32) 2-sulfurtransferase (Alcanivorax borkumensis (strain ATCC 700651 / DSM 11573 / NCIMB 13689 / SK2)).